We begin with the raw amino-acid sequence, 387 residues long: Phosphoglycerate kinase (387 aa).

Substrate contacts are provided by residues 21–23 (DLN), R36, 59–62 (HLGR), R113, and R146. Residues K197, E314, and 340–343 (GGDT) each bind ATP.

The protein belongs to the phosphoglycerate kinase family. In terms of assembly, monomer.

The protein localises to the cytoplasm. The catalysed reaction is (2R)-3-phosphoglycerate + ATP = (2R)-3-phospho-glyceroyl phosphate + ADP. Its pathway is carbohydrate degradation; glycolysis; pyruvate from D-glyceraldehyde 3-phosphate: step 2/5. The protein is Phosphoglycerate kinase of Pseudomonas syringae pv. tomato (strain ATCC BAA-871 / DC3000).